A 491-amino-acid chain; its full sequence is MERWWFDSILFKKGFEHRCGLSKSMGGLGPIENTSESEDPNRNDMKKNSHSWGSRDNSSYSNVDYLFGVKDIWNFISDETFLVVDRNGNSYSIYLDIEKHIFEIDSGHFFQSGLESSFYSYWNLSYLNNGSKTDDPHDDHYMDDTQYSWNNHINSYIDIYLESQIFIDTYIVSGSDNYSNSYISRSVCGESESKGSNISTSTNGSTIIESSNDLDITQKYRHLWVQCENCYGLNYKKILKSKMNLCEQCGYHLKMSSSDRIELSIDPDTWDAMDEDMVSLDPIEFHSEEEPYKDRIDSYQRKTGLTEAVQTGIGQLNGIPIALGVMDFQFMGGSMGSVVGEKITRLIEYATNQLLPLIIVCASGGARMQEGSLSLMQMAKISSALYDYQSNKKLFYVPILTSPTTGGVTASFGMLGDIIIAEPNAYIAFAGKRVIEQTLNKTVPEGSQAAEYLFQKGLFDLIVPRNLLKSVLSELFQLHAFFPLNKNSIEH.

Residues 28-56 form a disordered region; the sequence is LGPIENTSESEDPNRNDMKKNSHSWGSRD. In terms of domain architecture, CoA carboxyltransferase N-terminal spans 223–491; sequence LWVQCENCYG…FPLNKNSIEH (269 aa). Zn(2+) is bound by residues Cys227, Cys230, Cys246, and Cys249. The C4-type zinc finger occupies 227 to 249; the sequence is CENCYGLNYKKILKSKMNLCEQC.

The protein belongs to the AccD/PCCB family. Acetyl-CoA carboxylase is a heterohexamer composed of biotin carboxyl carrier protein, biotin carboxylase and 2 subunits each of ACCase subunit alpha and ACCase plastid-coded subunit beta (accD). The cofactor is Zn(2+).

The protein resides in the plastid. Its subcellular location is the chloroplast stroma. The enzyme catalyses N(6)-carboxybiotinyl-L-lysyl-[protein] + acetyl-CoA = N(6)-biotinyl-L-lysyl-[protein] + malonyl-CoA. The protein operates within lipid metabolism; malonyl-CoA biosynthesis; malonyl-CoA from acetyl-CoA: step 1/1. Functionally, component of the acetyl coenzyme A carboxylase (ACC) complex. Biotin carboxylase (BC) catalyzes the carboxylation of biotin on its carrier protein (BCCP) and then the CO(2) group is transferred by the transcarboxylase to acetyl-CoA to form malonyl-CoA. The polypeptide is Acetyl-coenzyme A carboxylase carboxyl transferase subunit beta, chloroplastic (Daucus carota (Wild carrot)).